An 89-amino-acid polypeptide reads, in one-letter code: Acylphosphatase (89 aa).

Residues 3–89 (HIHLQVFGRV…NQKLSDFRSI (87 aa)) form the Acylphosphatase-like domain. Active-site residues include Arg18 and Asn36.

It belongs to the acylphosphatase family.

It carries out the reaction an acyl phosphate + H2O = a carboxylate + phosphate + H(+). The polypeptide is Acylphosphatase (acyP) (Staphylococcus aureus (strain Mu3 / ATCC 700698)).